Reading from the N-terminus, the 284-residue chain is Tropomyosin (284 aa).

The stretch at 1–284 (MEAIKNKMQA…DQTFAELTGY (284 aa)) forms a coiled coil. Residues 22 to 43 (AEIAEQKSRDANLRAEKSEEEV) are disordered.

This sequence belongs to the tropomyosin family. Homodimer.

Tropomyosin, in association with the troponin complex, plays a central role in the calcium dependent regulation of muscle contraction. This is Tropomyosin from Lepidoglyphus destructor (Storage mite).